Reading from the N-terminus, the 338-residue chain is D-erythrose-4-phosphate dehydrogenase (338 aa).

Arg12–Ile13 serves as a coordination point for NAD(+). Residues Ser154–Thr156, Arg200, Thr213–Lys214, and Arg236 contribute to the substrate site. The active-site Nucleophile is Cys155. Residue Asn318 coordinates NAD(+).

Belongs to the glyceraldehyde-3-phosphate dehydrogenase family. Epd subfamily. As to quaternary structure, homotetramer.

Its subcellular location is the cytoplasm. It catalyses the reaction D-erythrose 4-phosphate + NAD(+) + H2O = 4-phospho-D-erythronate + NADH + 2 H(+). It participates in cofactor biosynthesis; pyridoxine 5'-phosphate biosynthesis; pyridoxine 5'-phosphate from D-erythrose 4-phosphate: step 1/5. In terms of biological role, catalyzes the NAD-dependent conversion of D-erythrose 4-phosphate to 4-phosphoerythronate. The protein is D-erythrose-4-phosphate dehydrogenase of Yersinia enterocolitica serotype O:8 / biotype 1B (strain NCTC 13174 / 8081).